The primary structure comprises 567 residues: Structural protein ORF567 (567 aa).

Residues 7-393 (INALLGFPEE…MPIEHKPEQQ (387 aa)) are disordered. The segment covering 65–79 (TPTPIRPAPPPPPPI) has biased composition (pro residues). Residues 180–200 (PKREPEHHTHGSTNNEHESKR) are compositionally biased toward basic and acidic residues. Residues 219–231 (THQTSPSHSSGGT) are compositionally biased toward low complexity. 2 stretches are compositionally biased toward pro residues: residues 253 to 278 (MPIP…PTPP) and 285 to 299 (TPTP…PPPT). Residues 300 to 312 (HGSSSTNSSGSTN) are compositionally biased toward low complexity. A compositionally biased stretch (pro residues) spans 319–335 (PKPIPIPPTPPPPPPHH). A compositionally biased stretch (basic and acidic residues) spans 343–353 (PKHESEHHDHG). A compositionally biased stretch (low complexity) spans 354-372 (SSSTNSSSSTSNSSSGGTN).

It localises to the virion. This is Structural protein ORF567 from Acidianus two-tailed virus (ATV).